The sequence spans 157 residues: MNKVPMTLAGYESLKEELRWRQQEERPRIIEAIAEARAHGDLSENAEYHAAKEAQSLNEGRISELEDLIARAEVIDVTKLSGDTVKFGATVVLVDEDTEEEKTYQIVGDQEADVKSGRISISSPIARALIGKGVGDLIEVNAPGGARGYEVLRVQYG.

This sequence belongs to the GreA/GreB family.

In terms of biological role, necessary for efficient RNA polymerase transcription elongation past template-encoded arresting sites. The arresting sites in DNA have the property of trapping a certain fraction of elongating RNA polymerases that pass through, resulting in locked ternary complexes. Cleavage of the nascent transcript by cleavage factors such as GreA or GreB allows the resumption of elongation from the new 3'terminus. GreA releases sequences of 2 to 3 nucleotides. This Chelativorans sp. (strain BNC1) protein is Transcription elongation factor GreA.